We begin with the raw amino-acid sequence, 404 residues long: Probable tRNA sulfurtransferase (404 aa).

One can recognise a THUMP domain in the interval 60–165; it reads QPVVEALKLV…DEAAYISYEE (106 aa). ATP contacts are provided by residues 183–184, 208–209, R265, G287, and Q296; these read ML and HF.

Belongs to the ThiI family.

The protein localises to the cytoplasm. The enzyme catalyses [ThiI sulfur-carrier protein]-S-sulfanyl-L-cysteine + a uridine in tRNA + 2 reduced [2Fe-2S]-[ferredoxin] + ATP + H(+) = [ThiI sulfur-carrier protein]-L-cysteine + a 4-thiouridine in tRNA + 2 oxidized [2Fe-2S]-[ferredoxin] + AMP + diphosphate. It carries out the reaction [ThiS sulfur-carrier protein]-C-terminal Gly-Gly-AMP + S-sulfanyl-L-cysteinyl-[cysteine desulfurase] + AH2 = [ThiS sulfur-carrier protein]-C-terminal-Gly-aminoethanethioate + L-cysteinyl-[cysteine desulfurase] + A + AMP + 2 H(+). It functions in the pathway cofactor biosynthesis; thiamine diphosphate biosynthesis. Catalyzes the ATP-dependent transfer of a sulfur to tRNA to produce 4-thiouridine in position 8 of tRNAs, which functions as a near-UV photosensor. Also catalyzes the transfer of sulfur to the sulfur carrier protein ThiS, forming ThiS-thiocarboxylate. This is a step in the synthesis of thiazole, in the thiamine biosynthesis pathway. The sulfur is donated as persulfide by IscS. The protein is Probable tRNA sulfurtransferase of Streptococcus pyogenes serotype M5 (strain Manfredo).